Here is a 160-residue protein sequence, read N- to C-terminus: CXXC motif containing zinc binding protein (160 aa).

Positions 33, 36, 67, and 70 each coordinate Zn(2+). Ser-75 bears the Phosphoserine mark.

It belongs to the UPF0587 family. In terms of assembly, monomer.

This is CXXC motif containing zinc binding protein from Homo sapiens (Human).